Consider the following 367-residue polypeptide: Phosphoribosylaminoimidazole-succinocarboxamide synthase (367 aa).

Belongs to the SAICAR synthetase family.

It carries out the reaction 5-amino-1-(5-phospho-D-ribosyl)imidazole-4-carboxylate + L-aspartate + ATP = (2S)-2-[5-amino-1-(5-phospho-beta-D-ribosyl)imidazole-4-carboxamido]succinate + ADP + phosphate + 2 H(+). The protein operates within purine metabolism; IMP biosynthesis via de novo pathway; 5-amino-1-(5-phospho-D-ribosyl)imidazole-4-carboxamide from 5-amino-1-(5-phospho-D-ribosyl)imidazole-4-carboxylate: step 1/2. This Vibrio atlanticus (strain LGP32) (Vibrio splendidus (strain Mel32)) protein is Phosphoribosylaminoimidazole-succinocarboxamide synthase.